Reading from the N-terminus, the 188-residue chain is Pyridoxal 5'-phosphate synthase subunit PdxT (188 aa).

46–48 (GES) provides a ligand contact to L-glutamine. Cys-78 functions as the Nucleophile in the catalytic mechanism. L-glutamine is bound by residues Arg-106 and 132 to 133 (IR). Catalysis depends on charge relay system residues His-169 and Glu-171.

The protein belongs to the glutaminase PdxT/SNO family. In terms of assembly, in the presence of PdxS, forms a dodecamer of heterodimers. Only shows activity in the heterodimer.

It carries out the reaction aldehydo-D-ribose 5-phosphate + D-glyceraldehyde 3-phosphate + L-glutamine = pyridoxal 5'-phosphate + L-glutamate + phosphate + 3 H2O + H(+). The catalysed reaction is L-glutamine + H2O = L-glutamate + NH4(+). The protein operates within cofactor biosynthesis; pyridoxal 5'-phosphate biosynthesis. Catalyzes the hydrolysis of glutamine to glutamate and ammonia as part of the biosynthesis of pyridoxal 5'-phosphate. The resulting ammonia molecule is channeled to the active site of PdxS. The polypeptide is Pyridoxal 5'-phosphate synthase subunit PdxT (Tropheryma whipplei (strain TW08/27) (Whipple's bacillus)).